Reading from the N-terminus, the 518-residue chain is Sensory neuron membrane protein 1 (518 aa).

Residues 1–8 (MKTAEKLG) are Cytoplasmic-facing. A helical membrane pass occupies residues 9 to 29 (IIGTTISIFGIGFGWGVFPWL). The Extracellular segment spans residues 30 to 456 (IRMQIGRVSL…ELFRILQFLD (427 aa)). Residues Asn-64, Asn-186, Asn-225, Asn-316, Asn-334, and Asn-381 are each glycosylated (N-linked (GlcNAc...) asparagine). Intrachain disulfides connect Cys-265-Cys-330, Cys-294-Cys-349, and Cys-332-Cys-338. The helical transmembrane segment at 457–477 (VIKWVITLFGAGVVSGGVGLY) threads the bilayer. At 478-518 (YKEKNSLPITPTSSATSKKIDNPTDKTTTHELGHTNFGYIN) the chain is on the cytoplasmic side.

It belongs to the CD36 family.

Its subcellular location is the cell membrane. Functionally, plays an olfactory role that is not restricted to pheromone sensitivity. This is Sensory neuron membrane protein 1 from Pediculus humanus subsp. corporis (Body louse).